A 542-amino-acid polypeptide reads, in one-letter code: Neutral amino acid transporter B(0) (542 aa).

The residue at position 1 (M1) is an N-acetylmethionine. Topologically, residues 1-52 (MVADPPRGDSKGLAAAEPTANGGLALASIEDQGEAAGGCCGSRDRVRRCLRA) are cytoplasmic. A helical membrane pass occupies residues 53–82 (NLLVLLTVVAVVVGVALGLGVSGAGGALAL). The Extracellular portion of the chain corresponds to 83-95 (GPERLSAFVFPGE). Residues 96–117 (LLLRLLRMIILPLVVCSLIGGA) traverse the membrane as a helical segment. The Cytoplasmic segment spans residues 118–131 (ASLDPGALGRLGAW). A helical membrane pass occupies residues 132-154 (ALLFFLVTTLLASALGVALALAL). At 155 to 225 (QPGAASAAIN…GTRVKVPVGQ (71 aa)) the chain is on the extracellular side. Residues N164 and N213 are each glycosylated (N-linked (GlcNAc...) asparagine). Residues 226-249 (EVEGMNILGLVVFAIVFGVALRKL) traverse the membrane as a helical segment. Topologically, residues 250-258 (GPEGELLIR) are cytoplasmic. A helical transmembrane segment spans residues 259–286 (FFNSFNEATMVLVSWIMWYAPVGIMFLV). Over 287–307 (AGKIVEMEDVGLLFARLGKYI) the chain is Extracellular. Residues 308-329 (LCCLLGHAIHGLLVLPLIYFLF) traverse the membrane as a helical segment. The Cytoplasmic segment spans residues 330–334 (TRKNP). Residues 335-365 (YRFLWGIVTPLATAFGTSSSSATLPLMMKCV) constitute an intramembrane region (discontinuously helical). Residues 366–374 (EENNGVAKH) are Cytoplasmic-facing. The chain crosses the membrane as a helical span at residues 375–401 (ISRFILPIGATVNMDGAALFQCVAAVF). Residues G383, T385, and N387 each coordinate Na(+). Topologically, residues 402 to 414 (IAQLSEQSLDFVK) are extracellular. The segment at residues 415–448 (IITILVTATASSVGAAGIPAGGVLTLAIILEAVN) is an intramembrane region (discontinuously helical). The Extracellular segment spans residues 449–461 (LPVDHISLILAVD). The helical transmembrane segment at 462–483 (WLVDRSCTVLNVEGDALGAGLL) threads the bilayer. The Na(+) site is built by N472 and D476. The Cytoplasmic segment spans residues 484–542 (QNYVDRTEVRSTEPELIQVKSELPLDPLPAPTEEGNPLLRHYRGPAGDATVASEKESVM). Residue S494 is modified to Phosphoserine. T495 bears the Phosphothreonine mark. A phosphoserine mark is found at S504, S536, and S540. The tract at residues 509–542 (DPLPAPTEEGNPLLRHYRGPAGDATVASEKESVM) is disordered.

The protein belongs to the dicarboxylate/amino acid:cation symporter (DAACS) (TC 2.A.23) family. SLC1A5 subfamily. As to quaternary structure, homotrimer.

The protein localises to the cell membrane. Its subcellular location is the melanosome. It catalyses the reaction L-glutamine(out) + L-serine(in) + Na(+)(out) = L-glutamine(in) + L-serine(out) + Na(+)(in). It carries out the reaction L-glutamine(in) + L-serine(out) + Na(+)(out) = L-glutamine(out) + L-serine(in) + Na(+)(in). The enzyme catalyses L-threonine(in) + L-glutamine(out) + Na(+)(out) = L-threonine(out) + L-glutamine(in) + Na(+)(in). The catalysed reaction is L-threonine(out) + L-glutamine(in) + Na(+)(out) = L-threonine(in) + L-glutamine(out) + Na(+)(in). It catalyses the reaction L-asparagine(in) + L-glutamine(out) + Na(+)(out) = L-asparagine(out) + L-glutamine(in) + Na(+)(in). It carries out the reaction L-asparagine(out) + L-glutamine(in) + Na(+)(out) = L-asparagine(in) + L-glutamine(out) + Na(+)(in). The enzyme catalyses L-glutamine(in) + L-alanine(out) + Na(+)(out) = L-glutamine(out) + L-alanine(in) + Na(+)(in). The catalysed reaction is L-valine(out) + L-glutamine(in) + Na(+)(out) = L-valine(in) + L-glutamine(out) + Na(+)(in). It catalyses the reaction L-glutamine(in) + L-methionine(out) + Na(+)(out) = L-glutamine(out) + L-methionine(in) + Na(+)(in). It carries out the reaction L-glutamine(in) + L-glutamate(out) + Na(+)(out) + H(+)(out) = L-glutamine(out) + L-glutamate(in) + Na(+)(in) + H(+)(in). The enzyme catalyses D-serine(in) + L-glutamine(out) + Na(+)(out) = D-serine(out) + L-glutamine(in) + Na(+)(in). The catalysed reaction is D-serine(in) + L-alanine(out) + Na(+)(out) = D-serine(out) + L-alanine(in) + Na(+)(in). It catalyses the reaction nitrate(in) = nitrate(out). It carries out the reaction iodide(out) = iodide(in). The enzyme catalyses thiocyanate(in) = thiocyanate(out). In terms of biological role, sodium-coupled antiporter of neutral amino acids. In a tri-substrate transport cycle, exchanges neutral amino acids between the extracellular and intracellular compartments, coupled to the inward cotransport of at least one sodium ion. The preferred substrate is the essential amino acid L-glutamine, a precursor for biosynthesis of proteins, nucleotides and amine sugars as well as an alternative fuel for mitochondrial oxidative phosphorylation. Exchanges L-glutamine with other neutral amino acids such as L-serine, L-threonine and L-asparagine in a bidirectional way. Provides L-glutamine to proliferating stem and activated cells driving the metabolic switch toward cell differentiation. The transport cycle is usually pH-independent, with the exception of L-glutamate. Transports extracellular L-glutamate coupled to the cotransport of one proton and one sodium ion in exchange for intracellular L-glutamine counter-ion. May provide for L-glutamate uptake in glial cells regulating glutamine/glutamate cycle in the nervous system. Can transport D-amino acids. Mediates D-serine release from the retinal glia potentially affecting NMDA receptor function in retinal neurons. Displays sodium- and amino acid-dependent but uncoupled channel-like anion conductance with a preference SCN(-) &gt;&gt; NO3(-) &gt; I(-) &gt; Cl(-). Through binding of the fusogenic protein syncytin-1/ERVW-1 may mediate trophoblasts syncytialization, the spontaneous fusion of their plasma membranes, an essential process in placental development. This is Neutral amino acid transporter B(0) (SLC1A5) from Macaca fascicularis (Crab-eating macaque).